We begin with the raw amino-acid sequence, 341 residues long: Probable cytosolic iron-sulfur protein assembly protein Ciao1 (341 aa).

WD repeat units follow at residues 12-51, 58-97, 102-141, 151-190, 197-236, 255-294, and 305-341; these read GHAG…RWVA, GHTR…FECN, GHDN…DQED, GHTQ…SEWE, SHSS…NALG, YHSR…DRNE, and AHSQ…VDAD.

It belongs to the WD repeat CIA1 family.

Essential component of the cytosolic iron-sulfur (Fe/S) protein assembly machinery. Required for the maturation of extramitochondrial Fe/S proteins. The polypeptide is Probable cytosolic iron-sulfur protein assembly protein Ciao1 (Anopheles gambiae (African malaria mosquito)).